The primary structure comprises 468 residues: MFSPILSLEIILALATLQSVFAVELQHVLGVNDRPYPQRTDDQYNILRHLGGLGPYIGYNGWGIAAESEIESCTIDQAHLLMRHGERYPSTNVGKQLEALYQKLLDADVEVPTGPLSFFQDYDYFVSDAAWYEQETTKGFYSGLNTAFDFGTTLRERYDHLINTSEEGKKLSVWAGSQERVVDTAKYFAQGFMKSNYTDMVEVVALEEEKSQGLNSLTARISCPNYNSHIYKDGDFPNDIAEREADRLNTLSPGFNITADDIPTIALYCGFELNVRGESSFCDVLSREALLYTAYLRDLGWYYNVGNGNPLGKTIGYVYANATRQLLENTEADPRDYPLYFSFSHDTDLLQVFTSLGLFNVTDLPLDQIQFQTSFKSTEIVPMGARLLTERLLCTVEGEEKYYVRTILNDAVFPLSDCSSGPGFSCPLNDYVSRLEALNEDSDFAENCGVPKNASYPLELSFFWDDLS.

The first 22 residues, 1–22 (MFSPILSLEIILALATLQSVFA), serve as a signal peptide directing secretion. Residue H84 is the Nucleophile of the active site. N-linked (GlcNAc...) asparagine glycans are attached at residues N163, N196, N256, and N321. The Proton donor role is filled by D346. N-linked (GlcNAc...) asparagine glycans are attached at residues N360 and N453.

It belongs to the histidine acid phosphatase family.

The enzyme catalyses a phosphate monoester + H2O = an alcohol + phosphate. This chain is Acid phosphatase PHO1 (PHO1), found in Komagataella pastoris (Yeast).